The chain runs to 388 residues: Protein-glutamate methylesterase/protein-glutamine glutaminase 1 (388 aa).

The 118-residue stretch at 4-121 (QVLVVDDSSF…ATNKDEAIRL (118 aa)) folds into the Response regulatory domain. D55 carries the post-translational modification 4-aspartylphosphate. The interval 149–190 (SARAGLSSTSPTLGSSTLGRSPASGLASSASRNSPTVSTPAS) is disordered. Low complexity predominate over residues 153–169 (GLSSTSPTLGSSTLGRS). Polar residues predominate over residues 174-189 (LASSASRNSPTVSTPA). The CheB-type methylesterase domain occupies 188–388 (PASAIRASGK…EAILKESGRG (201 aa)). Catalysis depends on residues S207, H234, and D330.

Belongs to the CheB family. Post-translationally, phosphorylated by CheA. Phosphorylation of the N-terminal regulatory domain activates the methylesterase activity.

It is found in the cytoplasm. It carries out the reaction [protein]-L-glutamate 5-O-methyl ester + H2O = L-glutamyl-[protein] + methanol + H(+). It catalyses the reaction L-glutaminyl-[protein] + H2O = L-glutamyl-[protein] + NH4(+). Its function is as follows. Involved in chemotaxis. Part of a chemotaxis signal transduction system that modulates chemotaxis in response to various stimuli. Catalyzes the demethylation of specific methylglutamate residues introduced into the chemoreceptors (methyl-accepting chemotaxis proteins or MCP) by CheR. Also mediates the irreversible deamidation of specific glutamine residues to glutamic acid. This Shewanella denitrificans (strain OS217 / ATCC BAA-1090 / DSM 15013) protein is Protein-glutamate methylesterase/protein-glutamine glutaminase 1.